We begin with the raw amino-acid sequence, 400 residues long: Enoyl-[acyl-carrier-protein] reductase [NADH] (400 aa).

Residues 74 to 75, 111 to 112, and 139 to 140 contribute to the NAD(+) site; these read FE, DA, and VA. Residue tyrosine 225 participates in substrate binding. Catalysis depends on tyrosine 235, which acts as the Proton donor. Residues lysine 244 and 273–275 each bind NAD(+); that span reads VVT.

This sequence belongs to the TER reductase family. In terms of assembly, monomer.

The catalysed reaction is a 2,3-saturated acyl-[ACP] + NAD(+) = a (2E)-enoyl-[ACP] + NADH + H(+). Its pathway is lipid metabolism; fatty acid biosynthesis. Functionally, involved in the final reduction of the elongation cycle of fatty acid synthesis (FAS II). Catalyzes the reduction of a carbon-carbon double bond in an enoyl moiety that is covalently linked to an acyl carrier protein (ACP). In Psychromonas ingrahamii (strain DSM 17664 / CCUG 51855 / 37), this protein is Enoyl-[acyl-carrier-protein] reductase [NADH].